Consider the following 426-residue polypeptide: 5-hydroxybenzimidazole synthase BzaB (426 aa).

Residues Met-95, Tyr-124, His-163, Ser-185–Gly-187, Asp-226–Arg-229, and Glu-265 each bind substrate. Position 269 (His-269) interacts with Zn(2+). A substrate-binding site is contributed by Phe-292. His-333 contacts Zn(2+). Residues Cys-407, Cys-410, and Cys-414 each contribute to the [4Fe-4S] cluster site.

This sequence belongs to the ThiC family. 5-hydroxybenzimidazole synthase subfamily. Requires [4Fe-4S] cluster as cofactor.

The enzyme catalyses 5-amino-1-(5-phospho-beta-D-ribosyl)imidazole + AH2 + S-adenosyl-L-methionine = 5-hydroxybenzimidazole + 5'-deoxyadenosine + formate + L-methionine + A + NH4(+) + phosphate + 2 H(+). Together with BzaA, probably catalyzes the conversion of aminoimidazole ribotide (AIR) to 5-hydroxybenzimidazole (5-HBI) in a radical S-adenosyl-L-methionine (SAM)-dependent reaction. Is thus involved in the anaerobic biosynthesis of the benzimidazole lower axial ligand of the cobamide produced by M.thermoacetica. Requires BzaA for catalytic activity, as BzaB alone displays no activity. The sequence is that of 5-hydroxybenzimidazole synthase BzaB from Moorella thermoacetica (strain ATCC 39073 / JCM 9320).